Here is a 96-residue protein sequence, read N- to C-terminus: Small ribosomal subunit protein bS18 (96 aa).

The segment covering 1-18 (MPPPRGKGRFGKDKRPKR) has biased composition (basic residues). The tract at residues 1–21 (MPPPRGKGRFGKDKRPKRNTQ) is disordered.

It belongs to the bacterial ribosomal protein bS18 family. Part of the 30S ribosomal subunit. Forms a tight heterodimer with protein bS6.

Binds as a heterodimer with protein bS6 to the central domain of the 16S rRNA, where it helps stabilize the platform of the 30S subunit. This is Small ribosomal subunit protein bS18 from Methylibium petroleiphilum (strain ATCC BAA-1232 / LMG 22953 / PM1).